The chain runs to 507 residues: Histidine ammonia-lyase (507 aa).

A cross-link (5-imidazolinone (Ala-Gly)) is located at residues 141–143 (ASG). Serine 142 is subject to 2,3-didehydroalanine (Ser).

The protein belongs to the PAL/histidase family. Contains an active site 4-methylidene-imidazol-5-one (MIO), which is formed autocatalytically by cyclization and dehydration of residues Ala-Ser-Gly.

The protein localises to the cytoplasm. The enzyme catalyses L-histidine = trans-urocanate + NH4(+). It participates in amino-acid degradation; L-histidine degradation into L-glutamate; N-formimidoyl-L-glutamate from L-histidine: step 1/3. The sequence is that of Histidine ammonia-lyase from Burkholderia pseudomallei (strain 668).